Reading from the N-terminus, the 103-residue chain is Putative sulfurtransferase YtwF (103 aa).

One can recognise a Rhodanese domain in the interval 17–100 (ADEELYLIDV…GMMAWEGETK (84 aa)). Cys65 serves as the catalytic Cysteine persulfide intermediate.

The sequence is that of Putative sulfurtransferase YtwF (ytwF) from Bacillus subtilis (strain 168).